We begin with the raw amino-acid sequence, 61 residues long: Large ribosomal subunit protein uL30 (61 aa).

This sequence belongs to the universal ribosomal protein uL30 family. Part of the 50S ribosomal subunit.

This is Large ribosomal subunit protein uL30 from Bordetella petrii (strain ATCC BAA-461 / DSM 12804 / CCUG 43448).